Reading from the N-terminus, the 452-residue chain is MNIVILAAGMGKRMQSALPKVLHPLAGKPLLSHVIDTARQLSPSTLCIIYGHGGEQVPQLLQSKDLSFAKQEPQLGTGHAVMQAVPQLNDDSPTLILYGDVPLTTAASLQRLLDIAGADKLGILTVDLDNPTGYGRIVRENGAITRIVEQKDANEQERSIREVNTGIIVAPTKQLKTWLANLSNKNAQGEYYLTDIVASAVADGVQVVSAQPDHVWETHGVNSKVQLAELERVHQNNIARALLEHGVTLADPARIDVRGTLTCGRDVSIDVGCIFEGDVTLADGVRIDAYCVLHNTTVGAQTHIRPYSHFEGATVGTACIIGPYARLRPGAVLGEDVHIGNFVEVKNSDIAAHSKANHLTYIGDSTIGSRVNIGAGTITCNYDGVNKSRTIIEDDVFVGSATQLIAPIRVGKGSTIGAGTTLTKDAPADKLTVSRSRQITVDGWQRPVKIKK.

The tract at residues 1-224 (MNIVILAAGM…VWETHGVNSK (224 aa)) is pyrophosphorylase. Residues 6-9 (LAAG), K20, Q71, 76-77 (GT), 98-100 (YGD), G135, E149, N164, and N222 each bind UDP-N-acetyl-alpha-D-glucosamine. D100 contributes to the Mg(2+) binding site. N222 is a Mg(2+) binding site. The tract at residues 225-245 (VQLAELERVHQNNIARALLEH) is linker. Positions 246-452 (GVTLADPARI…GWQRPVKIKK (207 aa)) are N-acetyltransferase. UDP-N-acetyl-alpha-D-glucosamine is bound by residues R328 and K346. H358 serves as the catalytic Proton acceptor. The UDP-N-acetyl-alpha-D-glucosamine site is built by Y361 and N372. Residues A375, 381-382 (NY), S400, A418, and R435 contribute to the acetyl-CoA site.

It in the N-terminal section; belongs to the N-acetylglucosamine-1-phosphate uridyltransferase family. This sequence in the C-terminal section; belongs to the transferase hexapeptide repeat family. As to quaternary structure, homotrimer. The cofactor is Mg(2+).

The protein localises to the cytoplasm. The catalysed reaction is alpha-D-glucosamine 1-phosphate + acetyl-CoA = N-acetyl-alpha-D-glucosamine 1-phosphate + CoA + H(+). It carries out the reaction N-acetyl-alpha-D-glucosamine 1-phosphate + UTP + H(+) = UDP-N-acetyl-alpha-D-glucosamine + diphosphate. Its pathway is nucleotide-sugar biosynthesis; UDP-N-acetyl-alpha-D-glucosamine biosynthesis; N-acetyl-alpha-D-glucosamine 1-phosphate from alpha-D-glucosamine 6-phosphate (route II): step 2/2. The protein operates within nucleotide-sugar biosynthesis; UDP-N-acetyl-alpha-D-glucosamine biosynthesis; UDP-N-acetyl-alpha-D-glucosamine from N-acetyl-alpha-D-glucosamine 1-phosphate: step 1/1. It participates in bacterial outer membrane biogenesis; LPS lipid A biosynthesis. Catalyzes the last two sequential reactions in the de novo biosynthetic pathway for UDP-N-acetylglucosamine (UDP-GlcNAc). The C-terminal domain catalyzes the transfer of acetyl group from acetyl coenzyme A to glucosamine-1-phosphate (GlcN-1-P) to produce N-acetylglucosamine-1-phosphate (GlcNAc-1-P), which is converted into UDP-GlcNAc by the transfer of uridine 5-monophosphate (from uridine 5-triphosphate), a reaction catalyzed by the N-terminal domain. This Herminiimonas arsenicoxydans protein is Bifunctional protein GlmU.